A 215-amino-acid chain; its full sequence is Probable transaldolase (215 aa).

The Schiff-base intermediate with substrate role is filled by K83.

Belongs to the transaldolase family. Type 3B subfamily.

It is found in the cytoplasm. It carries out the reaction D-sedoheptulose 7-phosphate + D-glyceraldehyde 3-phosphate = D-erythrose 4-phosphate + beta-D-fructose 6-phosphate. The protein operates within carbohydrate degradation; pentose phosphate pathway; D-glyceraldehyde 3-phosphate and beta-D-fructose 6-phosphate from D-ribose 5-phosphate and D-xylulose 5-phosphate (non-oxidative stage): step 2/3. Functionally, transaldolase is important for the balance of metabolites in the pentose-phosphate pathway. This Clostridium perfringens (strain 13 / Type A) protein is Probable transaldolase.